Reading from the N-terminus, the 330-residue chain is Aspartate--ammonia ligase (330 aa).

It belongs to the class-II aminoacyl-tRNA synthetase family. AsnA subfamily.

Its subcellular location is the cytoplasm. It catalyses the reaction L-aspartate + NH4(+) + ATP = L-asparagine + AMP + diphosphate + H(+). It participates in amino-acid biosynthesis; L-asparagine biosynthesis; L-asparagine from L-aspartate (ammonia route): step 1/1. In Escherichia fergusonii (strain ATCC 35469 / DSM 13698 / CCUG 18766 / IAM 14443 / JCM 21226 / LMG 7866 / NBRC 102419 / NCTC 12128 / CDC 0568-73), this protein is Aspartate--ammonia ligase.